Here is a 309-residue protein sequence, read N- to C-terminus: Caspase-7 (309 aa).

The propeptide at 1-24 (MSGDQHADRSSGEKSNGDQDDTVD) is N-terminally processed. Residues 1-31 (MSGDQHADRSSGEKSNGDQDDTVDAKPDRSS) are compositionally biased toward basic and acidic residues. The segment at 1 to 53 (MSGDQHADRSSGEKSNGDQDDTVDAKPDRSSRLSLFAKKKKNGEEEQPKSSLS) is disordered. The segment at 39–42 (KKKN) is exosite. The tract at residues 81-92 (KNFEDKTGMGTR) is loop L1. Active-site residues include His-149 and Cys-191. The loop L2 stretch occupies residues 192–201 (RGSEFDEGIQ). Positions 204–214 (SGPANDTLETD) are excised as a propeptide. The loop L3 stretch occupies residues 234-246 (VPGYYSWRNPGRG). The interval 282–296 (ESQSDDPRFSEKKQI) is loop L4.

This sequence belongs to the peptidase C14A family. As to quaternary structure, heterotetramer that consists of two anti-parallel arranged heterodimers, each one formed by a 20 kDa (p20) and a 11 kDa (p11) subunit. In terms of processing, cleavage by different proteases, such as granzyme B (GZMB), caspase-1 (CASP1), caspase-8 (CASP8) or caspase-9 (CASP9) generate the two active subunits. Its involvement in different programmed cell death processes is probably specified by the protease that activates CASP7. Cleaved and activated by initiator caspases (CASP8 and/or CASP9), leading to execution phase of apoptosis. Cleavage and maturation by GZMB regulates granzyme-mediated programmed cell death. Cleaved and activated by CASP1 in response to bacterial infection.

It localises to the cytoplasm. The protein resides in the cytosol. Its subcellular location is the nucleus. It is found in the secreted. The protein localises to the extracellular space. The enzyme catalyses Strict requirement for an Asp residue at position P1 and has a preferred cleavage sequence of Asp-Glu-Val-Asp-|-.. With respect to regulation, during activation, the N-terminal disordered prodomain is removed by cleavage. Concomitantly, double cleavage gives rise to a large Caspase-7 subunit p20 and a small Caspase-7 subunit p11. The two large and two small subunits then assemble to form the active CASP7 complex. Can be cleaved and activated by different caspases, depending on the context. Cleaved and activated by initiator caspases (CASP8 and/or CASP9), leading to execution phase of apoptosis. Cleavage and maturation by GZMB regulates granzyme-mediated programmed cell death. Cleavage and maturation by CASP1 regulates pyroptosis. Inhibited by BIRC6; following inhibition of BIRC6-caspase binding by DIABLO/SMAC, BIRC6 is subjected to caspase cleavage, leading to an increase in active caspases. Functionally, thiol protease involved in different programmed cell death processes, such as apoptosis, pyroptosis or granzyme-mediated programmed cell death, by proteolytically cleaving target proteins. Has a marked preference for Asp-Glu-Val-Asp (DEVD) consensus sequences, with some plasticity for alternate non-canonical sequences. Its involvement in the different programmed cell death processes is probably determined by upstream proteases that activate CASP7. Acts as an effector caspase involved in the execution phase of apoptosis: following cleavage and activation by initiator caspases (CASP8 and/or CASP9), mediates execution of apoptosis by catalyzing cleavage of proteins. Compared to CASP3, acts as a minor executioner caspase and cleaves a limited set of target proteins. Acts as a key regulator of the inflammatory response in response to bacterial infection by catalyzing cleavage and activation of the sphingomyelin phosphodiesterase SMPD1 in the extracellular milieu, thereby promoting membrane repair. Cleaves BIRC6 following inhibition of BIRC6-caspase binding by DIABLO/SMAC. This is Caspase-7 from Gallus gallus (Chicken).